A 1342-amino-acid chain; its full sequence is DNA-directed RNA polymerase subunit beta (1342 aa).

The protein belongs to the RNA polymerase beta chain family. As to quaternary structure, the RNAP catalytic core consists of 2 alpha, 1 beta, 1 beta' and 1 omega subunit. When a sigma factor is associated with the core the holoenzyme is formed, which can initiate transcription.

It carries out the reaction RNA(n) + a ribonucleoside 5'-triphosphate = RNA(n+1) + diphosphate. In terms of biological role, DNA-dependent RNA polymerase catalyzes the transcription of DNA into RNA using the four ribonucleoside triphosphates as substrates. This is DNA-directed RNA polymerase subunit beta from Salmonella typhimurium (strain LT2 / SGSC1412 / ATCC 700720).